We begin with the raw amino-acid sequence, 132 residues long: MGFSSTVGSVLILTTLLICSVYLYSSVDVVSSKFTNAYSQHAESLQGKMNENLELVEITKLGDDIVLKLSNNGTETLSCEHWTVMYNGTPKAYIANQSYVAPMDTVQISINGSTPCRISLISEYGNKYYYKL.

The N-terminal stretch at 1–18 is a signal peptide; it reads MGFSSTVGSVLILTTLLI. C19 carries the N-acetylcysteine modification. Residue C19 is the site of S-archaeol cysteine attachment.

It to M.jannaschii FlaF.

It localises to the archaeal flagellum. In Methanococcus voltae, this protein is Putative flagella-related protein F (flaF).